The primary structure comprises 87 residues: Large ribosomal subunit protein bL28 (87 aa).

This sequence belongs to the bacterial ribosomal protein bL28 family.

The sequence is that of Large ribosomal subunit protein bL28 from Akkermansia muciniphila (strain ATCC BAA-835 / DSM 22959 / JCM 33894 / BCRC 81048 / CCUG 64013 / CIP 107961 / Muc).